A 268-amino-acid polypeptide reads, in one-letter code: Proenkephalin-A (268 aa).

Positions 1-24 are cleaved as a signal peptide; that stretch reads MARFLRLCTWLLVLGSCLLATVQA. 3 cysteine pairs are disulfide-bonded: cysteine 26–cysteine 48, cysteine 30–cysteine 52, and cysteine 33–cysteine 65. Residues 162–185 are disordered; sequence GTGDNRAREGRHQESTDNDDNMSK. Basic and acidic residues predominate over residues 166 to 176; that stretch reads NRAREGRHQES. 2 propeptides span residues 197 to 208 and 218 to 228; these read SPQVEDEAKELQ and VGRPEWWMDYQ. Serine 252 carries the phosphoserine modification.

This sequence belongs to the opioid neuropeptide precursor family. In terms of processing, proenkephalin-A is cleaved by CTSL to generate Met-enkephalin. Post-translationally, processed and degraded by ACE. Probably cleaved by ACE. In terms of processing, processed by ACE to generate Met-enkephalin in the nucleus accumbens of the brain. Post-translationally, the N-terminal domain contains 6 conserved cysteines thought to be involved in disulfide bonding and/or processing.

The protein localises to the cytoplasmic vesicle. It localises to the secretory vesicle. The protein resides in the chromaffin granule lumen. It is found in the secreted. Neuropeptide that competes with and mimic the effects of opiate drugs. They play a role in a number of physiologic functions, including pain perception and responses to stress. Its function is as follows. Met-enkephalin-Arg-Phe neuropeptide acts as a strong ligand of Mu-type opioid receptor OPRM1. Met-enkephalin-Arg-Phe-binding to OPRM1 in the nucleus accumbens of the brain increases activation of OPRM1, leading to long-term synaptic depression of glutamate release. Functionally, increases glutamate release in the striatum and decreases GABA concentration in the striatum. In terms of biological role, increases glutamate release in the striatum. The sequence is that of Proenkephalin-A (PENK) from Mesocricetus auratus (Golden hamster).